Consider the following 376-residue polypeptide: Putative glutamate--cysteine ligase 2-1 (376 aa).

The protein belongs to the glutamate--cysteine ligase type 2 family. YbdK subfamily.

The enzyme catalyses L-cysteine + L-glutamate + ATP = gamma-L-glutamyl-L-cysteine + ADP + phosphate + H(+). Its function is as follows. ATP-dependent carboxylate-amine ligase which exhibits weak glutamate--cysteine ligase activity. This Mycobacterium sp. (strain KMS) protein is Putative glutamate--cysteine ligase 2-1.